Consider the following 191-residue polypeptide: Crossover junction endodeoxyribonuclease RuvC (191 aa).

Active-site residues include Asp-7, Glu-67, and Asp-140. Residues Asp-7, Glu-67, and Asp-140 each contribute to the Mg(2+) site.

This sequence belongs to the RuvC family. As to quaternary structure, homodimer which binds Holliday junction (HJ) DNA. The HJ becomes 2-fold symmetrical on binding to RuvC with unstacked arms; it has a different conformation from HJ DNA in complex with RuvA. In the full resolvosome a probable DNA-RuvA(4)-RuvB(12)-RuvC(2) complex forms which resolves the HJ. The cofactor is Mg(2+).

The protein localises to the cytoplasm. It carries out the reaction Endonucleolytic cleavage at a junction such as a reciprocal single-stranded crossover between two homologous DNA duplexes (Holliday junction).. The RuvA-RuvB-RuvC complex processes Holliday junction (HJ) DNA during genetic recombination and DNA repair. Endonuclease that resolves HJ intermediates. Cleaves cruciform DNA by making single-stranded nicks across the HJ at symmetrical positions within the homologous arms, yielding a 5'-phosphate and a 3'-hydroxyl group; requires a central core of homology in the junction. The consensus cleavage sequence is 5'-(A/T)TT(C/G)-3'. Cleavage occurs on the 3'-side of the TT dinucleotide at the point of strand exchange. HJ branch migration catalyzed by RuvA-RuvB allows RuvC to scan DNA until it finds its consensus sequence, where it cleaves and resolves the cruciform DNA. This Pelodictyon phaeoclathratiforme (strain DSM 5477 / BU-1) protein is Crossover junction endodeoxyribonuclease RuvC.